The following is a 129-amino-acid chain: Small ribosomal subunit protein uS11 (129 aa).

It belongs to the universal ribosomal protein uS11 family. In terms of assembly, part of the 30S ribosomal subunit. Interacts with proteins S7 and S18. Binds to IF-3.

In terms of biological role, located on the platform of the 30S subunit, it bridges several disparate RNA helices of the 16S rRNA. Forms part of the Shine-Dalgarno cleft in the 70S ribosome. In Novosphingobium aromaticivorans (strain ATCC 700278 / DSM 12444 / CCUG 56034 / CIP 105152 / NBRC 16084 / F199), this protein is Small ribosomal subunit protein uS11.